The following is a 180-amino-acid chain: Large ribosomal subunit protein uL5 (180 aa).

Belongs to the universal ribosomal protein uL5 family. As to quaternary structure, part of the 50S ribosomal subunit; part of the 5S rRNA/L5/L18/L25 subcomplex. Contacts the 5S rRNA and the P site tRNA. Forms a bridge to the 30S subunit in the 70S ribosome.

In terms of biological role, this is one of the proteins that bind and probably mediate the attachment of the 5S RNA into the large ribosomal subunit, where it forms part of the central protuberance. In the 70S ribosome it contacts protein S13 of the 30S subunit (bridge B1b), connecting the 2 subunits; this bridge is implicated in subunit movement. Contacts the P site tRNA; the 5S rRNA and some of its associated proteins might help stabilize positioning of ribosome-bound tRNAs. The protein is Large ribosomal subunit protein uL5 of Leuconostoc mesenteroides subsp. mesenteroides (strain ATCC 8293 / DSM 20343 / BCRC 11652 / CCM 1803 / JCM 6124 / NCDO 523 / NBRC 100496 / NCIMB 8023 / NCTC 12954 / NRRL B-1118 / 37Y).